Consider the following 417-residue polypeptide: Pre-mRNA-splicing factor RBM22 (417 aa).

The C3H1-type zinc-finger motif lies at 159–186; sequence RNRPHICSFWVKGECKRGEECPYRHEKP. Positions 232–305 constitute an RRM domain; it reads TTLYVGGLGD…RRLNVKWGRS (74 aa). 2 disordered regions span residues 303-348 and 369-417; these read GRSQ…SANY and GLSG…PSSG. The segment covering 309 to 318 has biased composition (basic and acidic residues); the sequence is RGKEREHDGS. Over residues 369-391 the composition is skewed to pro residues; that stretch reads GLSGPPPGFGPHMFPPMAPPPFL.

The protein belongs to the SLT11 family. In terms of assembly, component of the pre-catalytic and catalytic spliceosome complexes. Component of the postcatalytic spliceosome P complex.

It is found in the nucleus. It localises to the cytoplasm. In terms of biological role, required for pre-mRNA splicing as component of the activated spliceosome. Involved in the first step of pre-mRNA splicing. Binds directly to the internal stem-loop (ISL) domain of the U6 snRNA and to the pre-mRNA intron near the 5' splice site during the activation and catalytic phases of the spliceosome cycle. This chain is Pre-mRNA-splicing factor RBM22 (rbm22), found in Xenopus laevis (African clawed frog).